Reading from the N-terminus, the 1028-residue chain is SWI/SNF-related matrix-associated actin-dependent regulator of chromatin subfamily A containing DEAD/H box 1 (1028 aa).

Met1 is modified (N-acetylmethionine). The tract at residues 13–81 (KRNKIEEAPE…PENDRKASIS (69 aa)) is disordered. Phosphothreonine is present on Thr54. Phosphoserine is present on Ser57. At Thr71 the chain carries Phosphothreonine. Residue Lys77 forms a Glycyl lysine isopeptide (Lys-Gly) (interchain with G-Cter in SUMO2) linkage. Ser79 is modified (phosphoserine). A Glycyl lysine isopeptide (Lys-Gly) (interchain with G-Cter in SUMO2) cross-link involves residue Lys84. Phosphoserine is present on residues Ser124, Ser127, Ser132, and Ser153. The region spanning 158–200 (YSDNLSTVRQTRYSENLSSDLLKLIDSTSTMDGAIAAALLMFG) is the CUE 1 domain. 2 disordered regions span residues 204–253 (GGGP…NWEK) and 303–348 (ASPS…KRKK). Phosphoserine occurs at positions 213, 216, 241, and 244. The 44-residue stretch at 253-296 (KQESIVLKLQKEFPNFDKEELREVLKEHEWMYTEALESLKVFAE) folds into the CUE 2 domain. Ser304 carries the phosphoserine modification. Residues Lys337 and Lys473 each participate in a glycyl lysine isopeptide (Lys-Gly) (interchain with G-Cter in SUMO2) cross-link. The Helicase ATP-binding domain occupies 511–679 (ALVHKHGLNG…MSLLNFVMPH (169 aa)). Residue 523-531 (ADEMGLGKT) coordinates ATP. Positions 630-633 (DEGH) match the DEGH box motif. Positions 723-740 (RRVKEEVLKQLPPKKDRI) match the Nuclear localization signal motif. Lys726 participates in a covalent cross-link: Glycyl lysine isopeptide (Lys-Gly) (interchain with G-Cter in SUMO2). The region spanning 860 to 1012 (VLGCILSELK…MTTVDEGDEG (153 aa)) is the Helicase C-terminal domain. 899-906 (YLRLDGKT) contacts ATP. A Glycyl lysine isopeptide (Lys-Gly) (interchain with G-Cter in SUMO2) cross-link involves residue Lys998. The DEAD box motif lies at 1007–1010 (DEGD).

It belongs to the SNF2/RAD54 helicase family. In terms of assembly, binds to DNA preferentially in the vicinity of transcriptional start sites. Interacts with MSH2 and TRIM28. Part of a complex composed of TRIM28, HDAC1, HDAC2 and EHMT2. Interacts with PCNA.

It is found in the nucleus. Its subcellular location is the chromosome. The enzyme catalyses ATP + H2O = ADP + phosphate + H(+). Its function is as follows. DNA helicase that possesses intrinsic ATP-dependent nucleosome-remodeling activity and is both required for DNA repair and heterochromatin organization. Promotes DNA end resection of double-strand breaks (DSBs) following DNA damage: probably acts by weakening histone DNA interactions in nucleosomes flanking DSBs. Required for the restoration of heterochromatin organization after replication. Acts at replication sites to facilitate the maintenance of heterochromatin by directing H3 and H4 histones deacetylation, H3 'Lys-9' trimethylation (H3K9me3) and restoration of silencing. In Bos taurus (Bovine), this protein is SWI/SNF-related matrix-associated actin-dependent regulator of chromatin subfamily A containing DEAD/H box 1 (SMARCAD1).